The primary structure comprises 1257 residues: MNGYVDFSPSPTSPTKEPGAPQPTQAVLQEDVDMSSGSSGNENCSTGRDSQGSDCDDNGKELRMLVESSNTHPSPDDAFRLMMTEAEHNPSTSGCSSEQSAKADAHKELIRTLKELKVHLPADKKAKGKASTLATLKYALRSVKQVKANEEYYQLLMSSESQPCSVDVPSYSMEQVEGITSEYIVKNADMFAVAVSLVSGKILYISNQVASIFHCKKDAFSDAKFVEFLAPHDVSVFHSYTTPYKLPPWSVCSGLDSFTQECMEEKSFFCRVSVGKHHENEIRYQPFRMTPYLVKVQEQQGAESQLCCLLLAERVHSGYEAPRIPPEKRIFTTTHTPNCLFQAVDERAVPLLGYLPQDLIETPVLVQLHPSDRPLMLAIHKKILQAGGQPFDYSPIRFRTRNGEYITLDTSWSSFINPWSRKISFIIGRHKVRVGPLNEDVFAAPPCPEEKTPHPSVQELTEQIHRLLMQPVPHSGSSGYGSLGSNGSHEHLMSQTSSSDSNGQEESHRRRSGIFKTSGKIQTKSHVSHESGGQKEASVAEMQSSPPAQVKAVTTIERDSSGASLPKASFPEELAYKNQPPCSYQQISCLDSVIRYLESCSEAATLKRKCEFPANIPSRKATVSPGLHSGEAARPSKVTSHTEVSAHLSSLTLPGKAESVVSLTSQCSYSSTIVHVGDKKPQPELETVEDMASGPESLDGAAGGLSQEKGPLQKLGLTKEVLAAHTQKEEQGFLQRFREVSRLSALQAHCQNYLQERSRAQASDRGLRNTSGLESSWKKTGKNRKLKSKRVKTRDSSESTGSGGPVSHRPPLMGLNATAWSPSDTSQSSCPSAPFPTAVPAYPLPVFQAPGIVSTPGTVVAPPAATHTGFTMPVVPMGTQPEFAVQPLPFAAPLAPVMAFMLPSYPFPPATPNLPQAFLPSQPHFPAHPTLASEITPASQAEFPSRTSTLRQPCACPVTPPAGTVALGRASPPLFQSRGSSPLQLNLLQLEEAPEGSTGAAGTLGTTGTAASGLDCTSGTSRDRQPKAPPTCNEPSDTQNSDAISTSSDLLNLLLGEDLCSATGSALSRSGASATSDSLGSSSLGFGTSQSGAGSSDTSHTSKYFGSIDSSENNHKAKMIPDTEESEQFIKYVLQDPIWLLMANTDDSIMMTYQLPSRDLQAVLKEDQEKLKLLQRSQPRFTEGQRRELREVHPWVHTGGLPTAIDVTGCVYCESEEKGNICLPYEEDSPSPGLCDTSEAKEEEGEQLTGPRIEAQT.

Residues 1–60 (MNGYVDFSPSPTSPTKEPGAPQPTQAVLQEDVDMSSGSSGNENCSTGRDSQGSDCDDNGK) are disordered. Over residues 35–53 (SSGSSGNENCSTGRDSQGS) the composition is skewed to polar residues. The Nuclear export signal 1 signature appears at 109–118 (LIRTLKELKV). Residues 179 to 246 (ITSEYIVKNA…FHSYTTPYKL (68 aa)) form the PAS 1 domain. The LXXLL motif lies at 306-310 (LCCLL). The PAS 2 domain maps to 319 to 385 (YEAPRIPPEK…MLAIHKKILQ (67 aa)). The 44-residue stretch at 393-436 (YSPIRFRTRNGEYITLDTSWSSFINPWSRKISFIIGRHKVRVGP) folds into the PAC domain. The short motif at 460–469 (LTEQIHRLLM) is the Nuclear export signal 2 element. 2 disordered regions span residues 471–565 (PVPH…GASL) and 617–638 (PSRKATVSPGLHSGEAARPSKV). Residues 478–482 (SGYGS) form an important for protein stability region. A compositionally biased stretch (polar residues) spans 493–504 (MSQTSSSDSNGQ). The tract at residues 510 to 709 (RRSGIFKTSG…GAAGGLSQEK (200 aa)) is CSNK1E binding domain. 5 positions are modified to phosphoserine: Ser525, Ser528, Ser531, Ser538, and Ser544. Thr554 carries the phosphothreonine modification. Residues Ser659, Ser693, Ser697, Ser706, Ser758, and Ser763 each carry the phosphoserine modification. Positions 757 to 832 (RSRAQASDRG…SDTSQSSCPS (76 aa)) are disordered. The Nuclear localization signal motif lies at 778–794 (KKTGKNRKLKSKRVKTR). Over residues 779–792 (KTGKNRKLKSKRVK) the composition is skewed to basic residues. Positions 821–832 (SPSDTSQSSCPS) are enriched in low complexity. The residue at position 858 (Thr858) is a Phosphothreonine. The segment at 882–1067 (EFAVQPLPFA…DLCSATGSAL (186 aa)) is interaction with PPARG. At Ser939 the chain carries Phosphoserine. Residue Thr964 is modified to Phosphothreonine. Ser971 is modified (phosphoserine). The Nuclear export signal 3 motif lies at 983–990 (LQLNLLQL). The tract at residues 994–1044 (PEGSTGAAGTLGTTGTAASGLDCTSGTSRDRQPKAPPTCNEPSDTQNSDAI) is disordered. The segment covering 996 to 1014 (GSTGAAGTLGTTGTAASGL) has biased composition (low complexity). Residues 1033-1044 (NEPSDTQNSDAI) are compositionally biased toward polar residues. The LXXLL motif lies at 1051–1055 (LNLLL). Over residues 1070–1092 (SGASATSDSLGSSSLGFGTSQSG) the composition is skewed to low complexity. Residues 1070-1115 (SGASATSDSLGSSSLGFGTSQSGAGSSDTSHTSKYFGSIDSSENNH) are disordered. Residues 1093 to 1111 (AGSSDTSHTSKYFGSIDSS) are compositionally biased toward polar residues. Ser1126 bears the Phosphoserine mark. The interval 1157-1257 (SRDLQAVLKE…LTGPRIEAQT (101 aa)) is CRY binding domain. Residues 1224 to 1257 (PYEEDSPSPGLCDTSEAKEEEGEQLTGPRIEAQT) are disordered.

As to quaternary structure, homodimer. Component of the circadian core oscillator, which includes the CRY proteins, CLOCK or NPAS2, BMAL1 or BMAL2, CSNK1D and/or CSNK1E, TIMELESS, and the PER proteins. Interacts with CLOCK-BMAL1 (off DNA). Interacts with BMAL2. Interacts directly with PER1 and PER3, and through a C-terminal domain, with CRY1 and CRY2. Interacts (via PAS 2 domain) with TIMELESS. Interacts with NFIL3. Different large complexes have been identified with different repressive functions. The core of PER complexes is composed of at least PER1, PER2, PER3, CRY1, CRY2, CSNK1D and/or CSNK1E. The large PER complex involved in the repression of transcriptional termination is composed of at least PER2, CDK9, DDX5, DHX9, NCBP1 and POLR2A (active). The large PER complex involved in the histone deacetylation is composed of at least HDAC1, PER2, SFPQ and SIN3A. The large PER complex involved in the histone methylation is composed of at least PER2, CBX3, TRIM28, SUV39H1 and/or SUV39H2; CBX3 mediates the formation of the complex. Interacts with SETX; the interaction inhibits termination of circadian target genes. Interacts with the nuclear receptors HNF4A, NR1D1, NR4A2, RORA, PPARA, PPARG and THRA; the interaction with at least PPARG is ligand dependent. Interacts with PML. Interacts (phosphorylated) with BTRC and FBXW11; the interactions trigger proteasomal degradation. Interacts with NONO and SFPQ. Interacts with CAVIN3. Interacts with MAGEL2. Interacts with MAP1LC3B. Interacts with HNF4A. In terms of processing, acetylated. Deacetylated by SIRT1, resulting in decreased protein stability. Deacetylated by SIRT6, preventing its degradation by the proteasome, resulting in increased protein stability. Phosphorylated by CSNK1E and CSNK1D. Phosphorylation results in PER2 protein degradation. May be dephosphorylated by PP1. Post-translationally, ubiquitinated, leading to its proteasomal degradation. Ubiquitination may be inhibited by CRY1. In the brain, high expression in SCN during the subjective day. Constitutive expression in the cornu ammonis and in the dentate gyrus of the hippocampus. Also expressed in the piriform cortex and the glomeruli of the olfactory bulb, and at a lower extent in the cerebral cortex. Not expressed in the pars tuberalis and the Purkinje neurons. Also expressed in adipose tissue (white and brown), heart, kidney, bladder, lumbar spinal cord, skeletal muscle, spleen, lung, pancreas and liver with highest levels in skeletal muscle and liver and lowest levels in spleen.

It localises to the nucleus. The protein localises to the cytoplasm. It is found in the perinuclear region. Transcriptional repressor which forms a core component of the circadian clock. The circadian clock, an internal time-keeping system, regulates various physiological processes through the generation of approximately 24 hour circadian rhythms in gene expression, which are translated into rhythms in metabolism and behavior. It is derived from the Latin roots 'circa' (about) and 'diem' (day) and acts as an important regulator of a wide array of physiological functions including metabolism, sleep, body temperature, blood pressure, endocrine, immune, cardiovascular, and renal function. Consists of two major components: the central clock, residing in the suprachiasmatic nucleus (SCN) of the brain, and the peripheral clocks that are present in nearly every tissue and organ system. Both the central and peripheral clocks can be reset by environmental cues, also known as Zeitgebers (German for 'timegivers'). The predominant Zeitgeber for the central clock is light, which is sensed by retina and signals directly to the SCN. The central clock entrains the peripheral clocks through neuronal and hormonal signals, body temperature and feeding-related cues, aligning all clocks with the external light/dark cycle. Circadian rhythms allow an organism to achieve temporal homeostasis with its environment at the molecular level by regulating gene expression to create a peak of protein expression once every 24 hours to control when a particular physiological process is most active with respect to the solar day. Transcription and translation of core clock components (CLOCK, NPAS2, BMAL1, BMAL2, PER1, PER2, PER3, CRY1 and CRY2) plays a critical role in rhythm generation, whereas delays imposed by post-translational modifications (PTMs) are important for determining the period (tau) of the rhythms (tau refers to the period of a rhythm and is the length, in time, of one complete cycle). A diurnal rhythm is synchronized with the day/night cycle, while the ultradian and infradian rhythms have a period shorter and longer than 24 hours, respectively. Disruptions in the circadian rhythms contribute to the pathology of cardiovascular diseases, cancer, metabolic syndrome and aging. A transcription/translation feedback loop (TTFL) forms the core of the molecular circadian clock mechanism. Transcription factors, CLOCK or NPAS2 and BMAL1 or BMAL2, form the positive limb of the feedback loop, act in the form of a heterodimer and activate the transcription of core clock genes and clock-controlled genes (involved in key metabolic processes), harboring E-box elements (5'-CACGTG-3') within their promoters. The core clock genes: PER1/2/3 and CRY1/2 which are transcriptional repressors form the negative limb of the feedback loop and interact with the CLOCK|NPAS2-BMAL1|BMAL2 heterodimer inhibiting its activity and thereby negatively regulating their own expression. This heterodimer also activates nuclear receptors NR1D1/2 and RORA/B/G, which form a second feedback loop and which activate and repress BMAL1 transcription, respectively. PER1 and PER2 proteins transport CRY1 and CRY2 into the nucleus with appropriate circadian timing, but also contribute directly to repression of clock-controlled target genes through interaction with several classes of RNA-binding proteins, helicases and others transcriptional repressors. PER appears to regulate circadian control of transcription by at least three different modes. First, interacts directly with the CLOCK-BMAL1 at the tail end of the nascent transcript peak to recruit complexes containing the SIN3-HDAC that remodel chromatin to repress transcription. Second, brings H3K9 methyltransferases such as SUV39H1 and SUV39H2 to the E-box elements of the circadian target genes, like PER2 itself or PER1. The recruitment of each repressive modifier to the DNA seems to be very precisely temporally orchestrated by the large PER complex, the deacetylases acting before than the methyltransferases. Additionally, large PER complexes are also recruited to the target genes 3' termination site through interactions with RNA-binding proteins and helicases that may play a role in transcription termination to regulate transcription independently of CLOCK-BMAL1 interactions. Recruitment of large PER complexes to the elongating polymerase at PER and CRY termination sites inhibited SETX action, impeding RNA polymerase II release and thereby repressing transcriptional reinitiation. May propagate clock information to metabolic pathways via the interaction with nuclear receptors. Coactivator of PPARA and corepressor of NR1D1, binds rhythmically at the promoter of nuclear receptors target genes like BMAL1 or G6PC1. Directly and specifically represses PPARG proadipogenic activity by blocking PPARG recruitment to target promoters and thereby transcriptional activation. Required for fatty acid and lipid metabolism, is involved as well in the regulation of circulating insulin levels. Plays an important role in the maintenance of cardiovascular functions through the regulation of NO and vasodilatatory prostaglandins production in aortas. Controls circadian glutamate uptake in synaptic vesicles through the regulation of VGLUT1 expression. May also be involved in the regulation of inflammatory processes. Represses the CLOCK-BMAL1 induced transcription of BHLHE40/DEC1 and ATF4. Negatively regulates the formation of the TIMELESS-CRY1 complex by competing with TIMELESS for binding to CRY1. The chain is Period circadian protein homolog 2 (Per2) from Mus musculus (Mouse).